The primary structure comprises 177 residues: Large ribosomal subunit protein uL6 (177 aa).

Belongs to the universal ribosomal protein uL6 family. Part of the 50S ribosomal subunit.

Functionally, this protein binds to the 23S rRNA, and is important in its secondary structure. It is located near the subunit interface in the base of the L7/L12 stalk, and near the tRNA binding site of the peptidyltransferase center. The sequence is that of Large ribosomal subunit protein uL6 from Salmonella arizonae (strain ATCC BAA-731 / CDC346-86 / RSK2980).